We begin with the raw amino-acid sequence, 521 residues long: MAP kinase-activated protein kinase mak-1 (521 aa).

Acidic residues predominate over residues 1-12 (MMFEYEEDEDPM). The segment at 1–36 (MMFEYEEDEDPMEQQKHEEFKHHSTDHSGSPQENPF) is disordered. Positions 13–26 (EQQKHEEFKHHSTD) are enriched in basic and acidic residues. Positions 144-405 (TISAEIIGIG…IHELMATPLV (262 aa)) constitute a Protein kinase domain. ATP-binding positions include 150–158 (IGIGESGKV) and K173. Catalysis depends on D266, which acts as the Proton acceptor.

It belongs to the protein kinase superfamily. CAMK Ser/Thr protein kinase family. May interact (via protein kinase domain) with unc-22 (via protein kinase and CRD domains). Mg(2+) is required as a cofactor. Autophosphorylated in vitro. In terms of tissue distribution, expressed in body wall muscles (at protein level). Expressed in intestine.

The protein resides in the cytoplasm. Its subcellular location is the myofibril. The protein localises to the sarcomere. It localises to the a band. The enzyme catalyses L-seryl-[protein] + ATP = O-phospho-L-seryl-[protein] + ADP + H(+). The catalysed reaction is L-threonyl-[protein] + ATP = O-phospho-L-threonyl-[protein] + ADP + H(+). In terms of biological role, serine/threonine-protein kinase which may play a role in body wall muscle contraction. May phosphorylate unc-22/twitchin. This is MAP kinase-activated protein kinase mak-1 from Caenorhabditis elegans.